The chain runs to 98 residues: Large ribosomal subunit protein uL23 (98 aa).

The protein belongs to the universal ribosomal protein uL23 family. Part of the 50S ribosomal subunit. Contacts protein L29, and trigger factor when it is bound to the ribosome.

One of the early assembly proteins it binds 23S rRNA. One of the proteins that surrounds the polypeptide exit tunnel on the outside of the ribosome. Forms the main docking site for trigger factor binding to the ribosome. The chain is Large ribosomal subunit protein uL23 from Rickettsia canadensis (strain McKiel).